The following is a 252-amino-acid chain: 2-succinyl-6-hydroxy-2,4-cyclohexadiene-1-carboxylate synthase (252 aa).

This sequence belongs to the AB hydrolase superfamily. MenH family. In terms of assembly, monomer.

The catalysed reaction is 5-enolpyruvoyl-6-hydroxy-2-succinyl-cyclohex-3-ene-1-carboxylate = (1R,6R)-6-hydroxy-2-succinyl-cyclohexa-2,4-diene-1-carboxylate + pyruvate. Its pathway is quinol/quinone metabolism; 1,4-dihydroxy-2-naphthoate biosynthesis; 1,4-dihydroxy-2-naphthoate from chorismate: step 3/7. The protein operates within quinol/quinone metabolism; menaquinone biosynthesis. Functionally, catalyzes a proton abstraction reaction that results in 2,5-elimination of pyruvate from 2-succinyl-5-enolpyruvyl-6-hydroxy-3-cyclohexene-1-carboxylate (SEPHCHC) and the formation of 2-succinyl-6-hydroxy-2,4-cyclohexadiene-1-carboxylate (SHCHC). This Shigella flexneri serotype 5b (strain 8401) protein is 2-succinyl-6-hydroxy-2,4-cyclohexadiene-1-carboxylate synthase.